The primary structure comprises 112 residues: Nucleoid-associated protein BCI_0116 (112 aa).

The protein belongs to the YbaB/EbfC family. As to quaternary structure, homodimer.

It is found in the cytoplasm. The protein localises to the nucleoid. Binds to DNA and alters its conformation. May be involved in regulation of gene expression, nucleoid organization and DNA protection. The chain is Nucleoid-associated protein BCI_0116 from Baumannia cicadellinicola subsp. Homalodisca coagulata.